Reading from the N-terminus, the 138-residue chain is Small ribosomal subunit protein uS11c (138 aa).

Positions 1-21 are disordered; the sequence is MAKSIPKIGSRKTGRIGSRKH. Positions 9 to 21 are enriched in basic residues; that stretch reads GSRKTGRIGSRKH.

The protein belongs to the universal ribosomal protein uS11 family. Part of the 30S ribosomal subunit.

The protein localises to the plastid. Its subcellular location is the chloroplast. This Pisum sativum (Garden pea) protein is Small ribosomal subunit protein uS11c.